The following is a 360-amino-acid chain: Peptide chain release factor 1 (360 aa).

Residue Gln-235 is modified to N5-methylglutamine. The interval 281 to 310 (AERQRQDAAQAESRRLQVGSGDRSQRIRTY) is disordered.

This sequence belongs to the prokaryotic/mitochondrial release factor family. In terms of processing, methylated by PrmC. Methylation increases the termination efficiency of RF1.

The protein localises to the cytoplasm. Peptide chain release factor 1 directs the termination of translation in response to the peptide chain termination codons UAG and UAA. This Stenotrophomonas maltophilia (strain R551-3) protein is Peptide chain release factor 1.